The following is a 316-amino-acid chain: Pantothenate kinase (316 aa).

Residue 95-102 (GSVAVGKS) participates in ATP binding.

Belongs to the prokaryotic pantothenate kinase family.

Its subcellular location is the cytoplasm. The catalysed reaction is (R)-pantothenate + ATP = (R)-4'-phosphopantothenate + ADP + H(+). It participates in cofactor biosynthesis; coenzyme A biosynthesis; CoA from (R)-pantothenate: step 1/5. The chain is Pantothenate kinase from Shewanella sediminis (strain HAW-EB3).